The primary structure comprises 150 residues: MAIYQIVEIGSEVLREKAVPVKEITPNIEKLLDNMLDTLYDANGVGLAAPQVGVSKRVVVIDVGEGPIELINPVIIAKEGEDLDDEGCLSIPGITGQVARAAKVKVEALNRQGELQVIEGEGLLARCLQHEIDHLEGILFVDKAKKTQRR.

Residues C88 and H130 each coordinate Fe cation. Residue E131 is part of the active site. A Fe cation-binding site is contributed by H134.

The protein belongs to the polypeptide deformylase family. Fe(2+) serves as cofactor.

The catalysed reaction is N-terminal N-formyl-L-methionyl-[peptide] + H2O = N-terminal L-methionyl-[peptide] + formate. Functionally, removes the formyl group from the N-terminal Met of newly synthesized proteins. Requires at least a dipeptide for an efficient rate of reaction. N-terminal L-methionine is a prerequisite for activity but the enzyme has broad specificity at other positions. The polypeptide is Peptide deformylase (Desulfitobacterium hafniense (strain Y51)).